A 75-amino-acid polypeptide reads, in one-letter code: Metallothionein-like protein 1 (75 aa).

It belongs to the metallothionein superfamily. Type 15 family.

In terms of biological role, metallothioneins have a high content of cysteine residues that bind various heavy metals. In Trifolium repens (Creeping white clover), this protein is Metallothionein-like protein 1 (MT1B).